We begin with the raw amino-acid sequence, 245 residues long: Tetraspanin-6 (245 aa).

Residues Met1 to Ser19 are Cytoplasmic-facing. The chain crosses the membrane as a helical span at residues Val20–Ile40. At Trp41–Asn59 the chain is on the extracellular side. Residues Val60–Phe80 form a helical membrane-spanning segment. Residues Ala81 to Tyr93 are Cytoplasmic-facing. The chain crosses the membrane as a helical span at residues Ala94–Phe114. Residues Arg115 to Glu208 lie on the Extracellular side of the membrane. A glycan (N-linked (GlcNAc...) asparagine) is linked at Asn134. A helical transmembrane segment spans residues Met209–Leu229. Over Ala230–Val245 the chain is Cytoplasmic.

The protein belongs to the tetraspanin (TM4SF) family.

The protein resides in the membrane. The protein is Tetraspanin-6 (TSPAN6) of Bos taurus (Bovine).